The sequence spans 508 residues: Histidine ammonia-lyase (508 aa).

The 5-imidazolinone (Ala-Gly) cross-link spans 143 to 145; it reads ASG. S144 carries the 2,3-didehydroalanine (Ser) modification.

Belongs to the PAL/histidase family. In terms of processing, contains an active site 4-methylidene-imidazol-5-one (MIO), which is formed autocatalytically by cyclization and dehydration of residues Ala-Ser-Gly.

It is found in the cytoplasm. The catalysed reaction is L-histidine = trans-urocanate + NH4(+). Its pathway is amino-acid degradation; L-histidine degradation into L-glutamate; N-formimidoyl-L-glutamate from L-histidine: step 1/3. This is Histidine ammonia-lyase from Anaeromyxobacter dehalogenans (strain 2CP-C).